The following is a 304-amino-acid chain: Xylanase inhibitor protein 1 (304 aa).

A signal peptide spans 1–29 (MVALGRRSWLVPLAMVLAVSSCLAGPAMA). The GH18 domain occupies 34–304 (GQMTVFWGRN…GYGKTVKYWA (271 aa)). Intrachain disulfides connect C53–C93 and C190–C219.

Belongs to the glycosyl hydrolase 18 family. Xylanase inhibitor subfamily. As to quaternary structure, binds to fungal GH11 xylanases. Constitutively expressed in shoots.

The protein localises to the secreted. Fungal xylanase inhibitor. Possesses competitive inhibiting activity against fungal endo-1,4-beta-D-xylanases belonging to glycoside hydrolase family 11 (GH11). May function in plant defense against secreted fungal pathogen xylanases. Is similar to class III chitinases, but does not exhibit chitinase activity. This chain is Xylanase inhibitor protein 1, found in Oryza sativa subsp. japonica (Rice).